The chain runs to 247 residues: Reticulon-like protein B8 (247 aa).

The Reticulon domain occupies 61 to 247 (SADVLLWRNK…SGKFGLKKRE (187 aa)). The next 3 membrane-spanning stretches (helical) occupy residues 71–91 (KISASVLMGATAIWVLFEWIN), 92–112 (FHFLSLVCYALLLGMIAQFVW), and 166–186 (FLMAVIGLWVAAMVGSCCNFL).

The protein resides in the endoplasmic reticulum membrane. The chain is Reticulon-like protein B8 (RTNLB8) from Arabidopsis thaliana (Mouse-ear cress).